We begin with the raw amino-acid sequence, 447 residues long: Probable glycine dehydrogenase (decarboxylating) subunit 1 (447 aa).

The protein belongs to the GcvP family. N-terminal subunit subfamily. The glycine cleavage system is composed of four proteins: P, T, L and H. In this organism, the P 'protein' is a heterodimer of two subunits.

It catalyses the reaction N(6)-[(R)-lipoyl]-L-lysyl-[glycine-cleavage complex H protein] + glycine + H(+) = N(6)-[(R)-S(8)-aminomethyldihydrolipoyl]-L-lysyl-[glycine-cleavage complex H protein] + CO2. In terms of biological role, the glycine cleavage system catalyzes the degradation of glycine. The P protein binds the alpha-amino group of glycine through its pyridoxal phosphate cofactor; CO(2) is released and the remaining methylamine moiety is then transferred to the lipoamide cofactor of the H protein. This chain is Probable glycine dehydrogenase (decarboxylating) subunit 1, found in Bacillus thuringiensis subsp. konkukian (strain 97-27).